The following is a 194-amino-acid chain: Phosphoheptose isomerase (194 aa).

Residues leucine 34–proline 188 enclose the SIS domain. Asparagine 49–glycine 51 lines the substrate pocket. Zn(2+) contacts are provided by histidine 58 and glutamate 62. Residues glutamate 62, asparagine 90–aspartate 91, serine 116–serine 118, serine 121, and glutamine 168 each bind substrate. Zn(2+) is bound by residues glutamine 168 and histidine 176.

The protein belongs to the SIS family. GmhA subfamily. Requires Zn(2+) as cofactor.

The protein localises to the cytoplasm. The catalysed reaction is 2 D-sedoheptulose 7-phosphate = D-glycero-alpha-D-manno-heptose 7-phosphate + D-glycero-beta-D-manno-heptose 7-phosphate. It functions in the pathway carbohydrate biosynthesis; D-glycero-D-manno-heptose 7-phosphate biosynthesis; D-glycero-alpha-D-manno-heptose 7-phosphate and D-glycero-beta-D-manno-heptose 7-phosphate from sedoheptulose 7-phosphate: step 1/1. Functionally, catalyzes the isomerization of sedoheptulose 7-phosphate in D-glycero-D-manno-heptose 7-phosphate. The chain is Phosphoheptose isomerase from Fusobacterium nucleatum subsp. nucleatum (strain ATCC 25586 / DSM 15643 / BCRC 10681 / CIP 101130 / JCM 8532 / KCTC 2640 / LMG 13131 / VPI 4355).